Here is a 134-residue protein sequence, read N- to C-terminus: MSTTFCSSVSMQATSLAATTRISFQKPALVSRTNLSFNLSRSIPTRLSVSCAAKPETVEKVSKIVKKQLSLKDDQNVVAETKFADLGADSLDTVEIVMGLEEEFHIEMAEEKAQKITTVEEAAELIDELVQAKK.

Residues 1-51 constitute a chloroplast transit peptide; the sequence is MSTTFCSSVSMQATSLAATTRISFQKPALVSRTNLSFNLSRSIPTRLSVSC. Residues 55–130 form the Carrier domain; sequence PETVEKVSKI…EAAELIDELV (76 aa). Ser-90 carries the post-translational modification O-(pantetheine 4'-phosphoryl)serine.

It belongs to the acyl carrier protein (ACP) family. Post-translationally, 4'-phosphopantetheine is transferred from CoA to a specific serine of apo-ACP by acpS. This modification is essential for activity because fatty acids are bound in thioester linkage to the sulfhydryl of the prosthetic group. As to expression, seed.

The protein localises to the plastid. The protein resides in the chloroplast. It participates in lipid metabolism; fatty acid biosynthesis. In terms of biological role, carrier of the growing fatty acid chain in fatty acid biosynthesis. In Brassica napus (Rape), this protein is Acyl carrier protein, chloroplastic (ACL1.A1).